The sequence spans 154 residues: Probable transcription factor At4g00232 (154 aa).

The tract at residues 1 to 44 (MDKANTNRSKVCGGSGEAKLTGKKRKNVSAKQSKKDAKKENSQM) is disordered.

The protein belongs to the GeBP family.

This chain is Probable transcription factor At4g00232, found in Arabidopsis thaliana (Mouse-ear cress).